Consider the following 365-residue polypeptide: UBX domain-containing protein 2B (365 aa).

Positions 1 to 97 are disordered; it reads MADGGASPAQ…MSDDKENQRF (97 aa). Basic and acidic residues-rich tracts occupy residues 50–63 and 73–95; these read DEAKRQSLRSDKPT and LKIDSFRSLRKPERSMSDDKENQ. One can recognise an SEP domain in the interval 175–240; it reads DVQILLKLWR…MEDHQEQEYV (66 aa). Residues 286 to 363 enclose the UBX domain; that stretch reads DSVPATKIQI…DILNTVILQQ (78 aa).

It belongs to the NSFL1C family.

The protein resides in the nucleus. Its subcellular location is the cytoplasm. It localises to the cytosol. It is found in the endoplasmic reticulum. The protein localises to the golgi apparatus. The protein resides in the cytoskeleton. Its subcellular location is the microtubule organizing center. It localises to the centrosome. In terms of biological role, adapter protein required for Golgi and endoplasmic reticulum biogenesis. Involved in Golgi and endoplasmic reticulum maintenance during interphase and in their reassembly at the end of mitosis. Regulates the centrosomal levels of kinase AURKA/Aurora A during mitotic progression by promoting AURKA removal from centrosomes in prophase. Also, regulates spindle orientation during mitosis. The polypeptide is UBX domain-containing protein 2B (UBXN2B) (Gallus gallus (Chicken)).